The primary structure comprises 213 residues: Phosphoenolpyruvate guanylyltransferase (213 aa).

Phosphoenolpyruvate is bound by residues Thr-146, Gly-161, and Ser-164.

This sequence belongs to the CofC family.

The catalysed reaction is phosphoenolpyruvate + GTP + H(+) = enolpyruvoyl-2-diphospho-5'-guanosine + diphosphate. It functions in the pathway cofactor biosynthesis; coenzyme F420 biosynthesis. Its function is as follows. Guanylyltransferase that catalyzes the activation of phosphoenolpyruvate (PEP) as enolpyruvoyl-2-diphospho-5'-guanosine, via the condensation of PEP with GTP. It is involved in the biosynthesis of coenzyme F420, a hydride carrier cofactor. This is Phosphoenolpyruvate guanylyltransferase from Mycolicibacterium vanbaalenii (strain DSM 7251 / JCM 13017 / BCRC 16820 / KCTC 9966 / NRRL B-24157 / PYR-1) (Mycobacterium vanbaalenii).